Here is a 381-residue protein sequence, read N- to C-terminus: L-lactate dehydrogenase (381 aa).

The 380-residue stretch at 1–380 folds into the FMN hydroxy acid dehydrogenase domain; that stretch reads MIISASTDYR…SADSLVRELG (380 aa). Tyr-24 is a substrate binding site. Positions 106 and 127 each coordinate FMN. Tyr-129 contributes to the substrate binding site. Residue Thr-155 coordinates FMN. Arg-164 contacts substrate. Lys-251 contacts FMN. The active-site Proton acceptor is His-275. Arg-278 is a substrate binding site. 306-330 is an FMN binding site; that stretch reads DSGIRTGLDVVRMIALGADSVLLGR.

Belongs to the FMN-dependent alpha-hydroxy acid dehydrogenase family. Homotetramer. FMN is required as a cofactor.

The protein resides in the cell inner membrane. The enzyme catalyses (S)-lactate + A = pyruvate + AH2. Its function is as follows. Catalyzes the conversion of L-lactate to pyruvate. Is coupled to the respiratory chain. The polypeptide is L-lactate dehydrogenase (Pseudomonas paraeruginosa (strain DSM 24068 / PA7) (Pseudomonas aeruginosa (strain PA7))).